A 448-amino-acid chain; its full sequence is Asparagine--tRNA ligase (448 aa).

Belongs to the class-II aminoacyl-tRNA synthetase family. Homodimer.

Its subcellular location is the cytoplasm. The enzyme catalyses tRNA(Asn) + L-asparagine + ATP = L-asparaginyl-tRNA(Asn) + AMP + diphosphate + H(+). The chain is Asparagine--tRNA ligase from Streptococcus pyogenes serotype M12 (strain MGAS9429).